The sequence spans 25 residues: Ribosome-inactivating protein velutin (25 aa).

The disordered stretch occupies residues 1–25; it reads XHPDLFXXRPDNTASPKFEDPRLNP.

The protein belongs to the ribosome-inactivating protein family.

The enzyme catalyses Endohydrolysis of the N-glycosidic bond at one specific adenosine on the 28S rRNA.. Functionally, inhibits protein synthesis but does not possess ribonuclease activity. Also inhibits HIV-1 reverse transcriptase, beta-glucosidase and beta-glucuronidase. This Flammulina velutipes (Agaricus velutipes) protein is Ribosome-inactivating protein velutin.